Consider the following 419-residue polypeptide: uncharacterized protein (419 aa).

Belongs to the MT-A70-like family.

The protein resides in the cytoplasm. This is an uncharacterized protein from Schizosaccharomyces pombe (strain 972 / ATCC 24843) (Fission yeast).